A 462-amino-acid chain; its full sequence is FAD-dependent monooxygenase opaC (462 aa).

Residue asparagine 10 is glycosylated (N-linked (GlcNAc...) asparagine). The helical transmembrane segment at 14-34 (ITVIIIGLGIGGLTAAISCHL) threads the bilayer. Position 43 (aspartate 43) interacts with FAD. A glycan (N-linked (GlcNAc...) asparagine) is linked at asparagine 60. An FAD-binding site is contributed by arginine 115. Residue arginine 193 is part of the active site. FAD contacts are provided by aspartate 322 and alanine 335.

This sequence belongs to the paxM FAD-dependent monooxygenase family. It depends on FAD as a cofactor.

The protein resides in the membrane. Its pathway is secondary metabolite biosynthesis. In terms of biological role, FAD-dependent monooxygenase; part of the gene cluster that mediates the biosynthesis of oxepinamides, derivatives of anthranilyl-containing tripeptides that share an oxepin ring and a fused pyrimidinone moiety. The nonribosomal peptide synthetase (NRPS) opaA assembles the quinazolinone core with D-Phe incorporation. The first adenylation domain (A1) of opaA loads and activates anthranilic acid whereas the second A domain (A2) is for activating of L-Phe, which is then converted to D-form by the E domain. The third A domain (A3) is responsible for L-Ile activation and the terminal condensation domain C3 for cyclization and releasing the NRPS product protuboxepin K. The cytochrome P450 monooxygenase opaB then catalyzes alone the oxepin ring formation to convert protuboxepin K into protuboxepin A. The flavoenzyme opaC installs subsequently one hydroxyl group at the oxepin ring, accompanied by double bond migration, to form 15-epi-oxepinamide E. The epimerase opaE changes the D-Phe residue back to L-form, leading to oxepinamide E, which is further methylated at the hydroxyl group at C-12 by the O-methyltransferase OpaF to yield oxepinamide F. The protein is FAD-dependent monooxygenase opaC of Aspergillus ustus.